Reading from the N-terminus, the 350-residue chain is Histidinol-phosphate aminotransferase (350 aa).

Lys210 is subject to N6-(pyridoxal phosphate)lysine.

It belongs to the class-II pyridoxal-phosphate-dependent aminotransferase family. Histidinol-phosphate aminotransferase subfamily. Homodimer. It depends on pyridoxal 5'-phosphate as a cofactor.

The enzyme catalyses L-histidinol phosphate + 2-oxoglutarate = 3-(imidazol-4-yl)-2-oxopropyl phosphate + L-glutamate. It participates in amino-acid biosynthesis; L-histidine biosynthesis; L-histidine from 5-phospho-alpha-D-ribose 1-diphosphate: step 7/9. The polypeptide is Histidinol-phosphate aminotransferase (Pseudomonas syringae pv. syringae (strain B728a)).